The following is a 773-amino-acid chain: 3-isopropylmalate dehydratase (773 aa).

[4Fe-4S] cluster-binding residues include C355, C415, and C418.

This sequence belongs to the aconitase/IPM isomerase family. As to quaternary structure, monomer. [4Fe-4S] cluster serves as cofactor.

It catalyses the reaction (2R,3S)-3-isopropylmalate = (2S)-2-isopropylmalate. It participates in amino-acid biosynthesis; L-leucine biosynthesis; L-leucine from 3-methyl-2-oxobutanoate: step 2/4. Its function is as follows. Catalyzes the isomerization between 2-isopropylmalate and 3-isopropylmalate, via the formation of 2-isopropylmaleate. The sequence is that of 3-isopropylmalate dehydratase (LEU1) from Mycosarcoma maydis (Corn smut fungus).